The following is a 665-amino-acid chain: Filensin (665 aa).

Residues 1–40 are head; that stretch reads MYRRSYVFQTRKEQYEHADEASRAAEPERPADEGWAGATS. Ser5 carries the phosphoserine modification. An IF rod domain is found at 40–320; the sequence is SLAALQGLGE…RIIEIEGNRL (281 aa). Residues 41 to 75 form a coil 1A region; it reads LAALQGLGERVAAHVQRARALEQRHAGLRRQLDAF. At Ala42 the chain carries N-acetylalanine. A linker 1 region spans residues 76–84; sequence QRLGELAGP. Residues 85–184 are coil 1B; sequence EDALARQVES…RHKKNLLEVQ (100 aa). Positions 185–201 are linker 12; it reads TYISILQQIIHTTPPAS. Positions 202–320 are coil 2; the sequence is IVTSGMREEK…RIIEIEGNRL (119 aa). The interval 321–665 is tail; that stretch reads TSAFIETPIP…DKKKSGEKSS (345 aa). Residues Ser341 and Ser420 each carry the phosphoserine modification. Disordered regions lie at residues 410-439 and 506-614; these read SKFESESKEVSPLTQEGAPEDVPDGGQISK and YDGQ…KGPP. The N-myristoyl glycine moiety is linked to residue Gly434. Ser513 carries the post-translational modification Phosphoserine. Residues 556 to 571 show a composition bias toward basic and acidic residues; that stretch reads PEEKREGEERDEESRR. Position 665 is a phosphoserine (Ser665).

It belongs to the intermediate filament family. Part of a complex required for lens intermediate filament formation composed of BFSP1, BFSP2 and CRYAA. Identified in a complex that contains VIM, EZR, AHNAK, BFSP1, BFSP2, ANK2, PLEC, PRX and spectrin. Found in a complex composed of PPL (via C-terminal linker domain), BFSP1 and BFSP2 in the retinal lens. Within the complex interacts with BFSP2. Interacts (via C-terminus) with MIP (via C-terminus) in aged lens fiber cells. Proteolytically cleaved during lens cell fiber differentiation with increased fragmentation as fiber cell age increases. Post-translationally, myristoylated at Gly-434 following proteolytic cleavage at Asp-433. In terms of processing, acetylated at Ala-42 following proteolytic cleavage at Leu-41. Expressed in the cortex and nucleus of the retina lens (at protein level).

It localises to the cell membrane. The protein localises to the cytoplasm. Its subcellular location is the cytoskeleton. The protein resides in the cell cortex. In terms of biological role, required for the correct formation of lens intermediate filaments as part of a complex composed of BFSP1, BFSP2 and CRYAA. Involved in altering the calcium regulation of MIP water permeability. In Homo sapiens (Human), this protein is Filensin (BFSP1).